A 535-amino-acid chain; its full sequence is Alpha-1,3-mannosyl-glycoprotein 4-beta-N-acetylglucosaminyltransferase A (535 aa).

Over 1–6 (MRLRNG) the chain is Cytoplasmic. The chain crosses the membrane as a helical; Signal-anchor for type II membrane protein span at residues 7–27 (TVATALVFVTSFLTLSWYTTW). The stretch at 28 to 63 (QNGKEKLIAYQREFLALKERLRVAEHRISQRSSELN) forms a coiled coil. The Lumenal portion of the chain corresponds to 28–535 (QNGKEKLIAY…NEIHIKKVTS (508 aa)). N-linked (GlcNAc...) asparagine glycosylation is found at Asn-77 and Asn-458. Position 474 is a phosphoserine (Ser-474).

The protein belongs to the glycosyltransferase 54 family. Requires a divalent metal cation as cofactor. In terms of processing, N-glycosylated.

Its subcellular location is the golgi apparatus membrane. It is found in the secreted. The enzyme catalyses N(4)-{beta-D-GlcNAc-(1-&gt;2)-alpha-D-Man-(1-&gt;3)-[beta-D-GlcNAc-(1-&gt;2)-alpha-D-Man-(1-&gt;6)]-beta-D-Man-(1-&gt;4)-beta-D-GlcNAc-(1-&gt;4)-beta-D-GlcNAc}-L-asparaginyl-[protein] + UDP-N-acetyl-alpha-D-glucosamine = N(4)-{beta-D-GlcNAc-(1-&gt;2)-[beta-D-GlcNAc-(1-&gt;4)]-alpha-D-Man-(1-&gt;3)-[beta-D-GlcNAc-(1-&gt;2)-alpha-D-Man-(1-&gt;6)]-beta-D-Man-(1-&gt;4)-beta-D-GlcNAc-(1-&gt;4)-beta-D-GlcNAc}-L-asparaginyl-[protein] + UDP + H(+). It carries out the reaction an N(4)-{beta-D-GlcNAc-(1-&gt;2)-alpha-D-Man-(1-&gt;3)-[alpha-D-Man-(1-&gt;6)]-beta-D-Man-(1-&gt;4)-beta-D-GlcNAc-(1-&gt;4)-beta-D-GlcNAc}-L-asparaginyl-[protein] + UDP-N-acetyl-alpha-D-glucosamine = an N(4)-{beta-D-GlcNAc-(1-&gt;2)-[beta-D-GlcNAc-(1-&gt;4)]-alpha-D-Man-(1-&gt;3)-[alpha-D-Man-(1-&gt;6)]-beta-D-Man-(1-&gt;4)-beta-D-GlcNAc-(1-&gt;4)-beta-D-GlcNAc}-L-asparaginyl-[protein] + UDP + H(+). It catalyses the reaction an N(4)-{beta-D-GlcNAc-(1-&gt;2)-alpha-D-Man-(1-&gt;3)-[beta-D-GlcNAc-(1-&gt;2)-[beta-D-GlcNAc-(1-&gt;6)]-alpha-D-Man-(1-&gt;6)]-beta-D-Man-(1-&gt;4)-beta-D-GlcNAc-(1-&gt;4)-beta-D-GlcNAc}-L-asparaginyl-[protein] + UDP-N-acetyl-alpha-D-glucosamine = an N(4)-{beta-D-GlcNAc-(1-&gt;2)-[beta-D-GlcNAc-(1-&gt;4)]-alpha-D-Man-(1-&gt;3)-[beta-D-GlcNAc-(1-&gt;2)-[beta-D-GlcNAc-(1-&gt;6)]-alpha-D-Man-(1-&gt;6)]-beta-D-Man-(1-&gt;4)-beta-D-GlcNAc-(1-&gt;4)-beta-D-GlcNAc}-L-asparaginyl-[protein] + UDP + H(+). The catalysed reaction is an N(4)-{beta-D-GlcNAc-(1-&gt;2)-alpha-D-Man-(1-&gt;3)-[beta-D-GlcNAc-(1-&gt;2)-alpha-D-Man-(1-&gt;6)]-beta-D-Man-(1-&gt;4)-beta-D-GlcNAc-(1-&gt;4)-[alpha-L-Fuc-(1-&gt;6)]-beta-D-GlcNAc}-L-asparaginyl-[protein] + UDP-N-acetyl-alpha-D-glucosamine = N(4)-{beta-D-GlcNAc-(1-&gt;2)-[beta-D-GlcNAc-(1-&gt;4)]-alpha-D-Man-(1-&gt;3)-[beta-D-GlcNAc-(1-&gt;2)-alpha-D-Man-(1-&gt;6)]-beta-D-Man-(1-&gt;4)-beta-D-GlcNAc-(1-&gt;4)-[alpha-L-Fuc-(1-&gt;6)]-beta-D-GlcNAc}-asparaginyl-[protein] + UDP + H(+). The enzyme catalyses an N(4)-{beta-D-GlcNAc-(1-&gt;2)-alpha-D-Man-(1-&gt;3)-[beta-D-Gal-(1-&gt;4)-beta-D-GlcNAc-(1-&gt;2)-alpha-D-Man-(1-&gt;6)]-beta-D-Man-(1-&gt;4)-beta-D-GlcNAc-(1-&gt;4)-beta-D-GlcNAc}-L-asparaginyl-[protein] + UDP-N-acetyl-alpha-D-glucosamine = an N(4)-{beta-D-GlcNAc-(1-&gt;2)-[beta-D-GlcNAc-(1-&gt;4)]-alpha-D-Man-(1-&gt;3)-[beta-D-Gal-(1-&gt;4)-beta-D-GlcNAc-(1-&gt;2)-alpha-D-Man-(1-&gt;6)]-beta-D-Man-(1-&gt;4)-beta-D-GlcNAc-(1-&gt;4)-beta-D-GlcNAc}-L-asparaginyl-[protein] + UDP + H(+). It carries out the reaction N(4)-{beta-D-GlcNAc-(1-&gt;2)-alpha-D-Man-(1-&gt;3)-[alpha-D-Man-(1-&gt;3)-{alpha-D-Man-(1-&gt;6)}-alpha-D-Man-(1-&gt;6)]-beta-D-Man-(1-&gt;4)-beta-D-GlcNAc-(1-&gt;4)-beta-D-GlcNAc}-asparaginyl-[protein] + UDP-N-acetyl-alpha-D-glucosamine = N(4)-{beta-D-GlcNAc-(1-&gt;2)-[beta-D-GlcNAc-(1-&gt;4)]-alpha-D-Man-(1-&gt;3)-[alpha-D-Man-(1-&gt;3)-{alpha-D-Man-(1-&gt;6)}-alpha-D-Man-(1-&gt;6)]-beta-D-Man-(1-&gt;4)-beta-D-GlcNAc-(1-&gt;4)-beta-D-GlcNAc}-asparaginyl-[protein] + UDP + H(+). It catalyses the reaction N(4)-{beta-D-GlcNAc-(1-&gt;2)-alpha-D-Man-(1-&gt;3)-beta-D-Man-(1-&gt;4)-beta-D-GlcNAc-(1-&gt;4)-beta-D-GlcNAc}-asparaginyl-[protein] + UDP-N-acetyl-alpha-D-glucosamine = N(4)-{beta-D-GlcNAc-(1-&gt;2)-[beta-D-GlcNAc-(1-&gt;4)]-alpha-D-Man-(1-&gt;3)-beta-D-Man-(1-&gt;4)-beta-D-GlcNAc-(1-&gt;4)-beta-D-GlcNAc}-asparaginyl-[protein] + UDP + H(+). It functions in the pathway protein modification; protein glycosylation. Its activity is regulated as follows. Inhibited by UDP. In terms of biological role, glycosyltransferase that catalyze the transfer of GlcNAc from UDP-GlcNAc to the GlcNAcbeta1-2Manalpha1-3 arm of the core structure of N-linked glycans through a beta1-4 linkage and participates in the production of tri- and tetra-antennary N-linked sugar chains. Involved in glucose transport by mediating SLC2A2/GLUT2 glycosylation, thereby controlling cell-surface expression of SLC2A2 in pancreatic beta cells. The sequence is that of Alpha-1,3-mannosyl-glycoprotein 4-beta-N-acetylglucosaminyltransferase A from Mus musculus (Mouse).